The following is a 556-amino-acid chain: 2-succinyl-5-enolpyruvyl-6-hydroxy-3-cyclohexene-1-carboxylate synthase (556 aa).

It belongs to the TPP enzyme family. MenD subfamily. In terms of assembly, homodimer. It depends on Mg(2+) as a cofactor. The cofactor is Mn(2+). Requires thiamine diphosphate as cofactor.

It carries out the reaction isochorismate + 2-oxoglutarate + H(+) = 5-enolpyruvoyl-6-hydroxy-2-succinyl-cyclohex-3-ene-1-carboxylate + CO2. Its pathway is quinol/quinone metabolism; 1,4-dihydroxy-2-naphthoate biosynthesis; 1,4-dihydroxy-2-naphthoate from chorismate: step 2/7. It functions in the pathway quinol/quinone metabolism; menaquinone biosynthesis. Catalyzes the thiamine diphosphate-dependent decarboxylation of 2-oxoglutarate and the subsequent addition of the resulting succinic semialdehyde-thiamine pyrophosphate anion to isochorismate to yield 2-succinyl-5-enolpyruvyl-6-hydroxy-3-cyclohexene-1-carboxylate (SEPHCHC). The sequence is that of 2-succinyl-5-enolpyruvyl-6-hydroxy-3-cyclohexene-1-carboxylate synthase from Escherichia coli O8 (strain IAI1).